Consider the following 908-residue polypeptide: Vacuolar membrane protease (908 aa).

Residues 1-25 (MTSGEEEEGTREQVPVSQPTGTTSI) form a disordered region. Residues 1-48 (MTSGEEEEGTREQVPVSQPTGTTSIVSTKEKQPNIFIRAIRATFGYRK) lie on the Cytoplasmic side of the membrane. The span at 15–25 (PVSQPTGTTSI) shows a compositional bias: polar residues. A helical membrane pass occupies residues 49 to 69 (TSLTLFVLLTIFFTVAFSSYD). At 70–381 (NSLDFTIDLP…FSTSVTTLNT (312 aa)) the chain is on the vacuolar side. N-linked (GlcNAc...) asparagine glycans are attached at residues asparagine 143 and asparagine 162. Zn(2+)-binding residues include histidine 176 and aspartate 188. Glutamate 221 (proton acceptor) is an active-site residue. Glutamate 222, glutamate 247, and histidine 319 together coordinate Zn(2+). Asparagine 354 is a glycosylation site (N-linked (GlcNAc...) asparagine). The chain crosses the membrane as a helical span at residues 382–402 (INMVLIVLFPVLSGPLLFITV). The Cytoplasmic segment spans residues 403-411 (RYKKWNIGT). A helical transmembrane segment spans residues 412-432 (ANLFSLPLAIVITSLVGAVVV). Topologically, residues 433–449 (NQGFRLVNEFLPASRPM) are vacuolar. A helical transmembrane segment spans residues 450–470 (LLVTTTTSILLLTYYILLNGI). The Cytoplasmic segment spans residues 471–480 (NFVSPSGDQK). A helical transmembrane segment spans residues 481–501 (LVSIIQISFIYWIALIFVTRG). At 502-514 (LSQNAIGDDHTGE) the chain is on the vacuolar side. The helical transmembrane segment at 515 to 535 (FAFTILFLLEATASLFGLIGW) threads the bilayer. Topologically, residues 536–602 (TFTRSVKEPT…MQHFGYDWSL (67 aa)) are cytoplasmic. The tract at residues 543-584 (EPTGDEEPLLNGRMERYVDGSDDEDDVEEEDDEDQSEEENHQ) is disordered. The span at 562 to 579 (GSDDEDDVEEEDDEDQSE) shows a compositional bias: acidic residues. A helical transmembrane segment spans residues 603-623 (QFLLIVPISSLVIYNSGWLVI). At 624 to 638 (DGINKSIQESLVAEN) the chain is on the vacuolar side. N-linked (GlcNAc...) asparagine glycosylation is present at asparagine 627. A helical membrane pass occupies residues 639–659 (FIYLIIQLFSQFWILPILPFV). Residues 660–664 (YKLNR) lie on the Cytoplasmic side of the membrane. The chain crosses the membrane as a helical span at residues 665–685 (FMVLGLIAFALVGVTLISSVD). The Vacuolar segment spans residues 686–908 (PFNQDNPLKL…LVSLTNRIEV (223 aa)). Asparagine 752 and asparagine 764 each carry an N-linked (GlcNAc...) asparagine glycan.

This sequence belongs to the peptidase M28 family. Zn(2+) serves as cofactor.

It is found in the vacuole membrane. May be involved in vacuolar sorting and osmoregulation. This chain is Vacuolar membrane protease, found in Candida tropicalis (strain ATCC MYA-3404 / T1) (Yeast).